The primary structure comprises 411 residues: ATP-dependent Clp protease ATP-binding subunit ClpX (411 aa).

The ClpX-type ZB domain occupies 1 to 51; sequence MAKKKDEEYCSFCGMPRTQVNLMLEGVHAHICDECALRAGEVVREALQKFK. Cys-10, Cys-13, Cys-32, and Cys-35 together coordinate Zn(2+). ATP is bound at residue 119–126; sequence PTGTGKTL.

Belongs to the ClpX chaperone family. As to quaternary structure, component of the ClpX-ClpP complex. Forms a hexameric ring that, in the presence of ATP, binds to fourteen ClpP subunits assembled into a disk-like structure with a central cavity, resembling the structure of eukaryotic proteasomes.

In terms of biological role, ATP-dependent specificity component of the Clp protease. It directs the protease to specific substrates. Can perform chaperone functions in the absence of ClpP. The protein is ATP-dependent Clp protease ATP-binding subunit ClpX of Porphyromonas gingivalis (strain ATCC 33277 / DSM 20709 / CIP 103683 / JCM 12257 / NCTC 11834 / 2561).